Reading from the N-terminus, the 454-residue chain is Chromosomal replication initiator protein DnaA (454 aa).

Residues 1–79 (MSLCLWKQCL…NSPFIKFKVY (79 aa)) are domain I, interacts with DnaA modulators. The segment at 79–117 (YQTSKEKKFKKNILQKIQNLNAKPIWDKIPIFKKSSHRS) is domain II. Residues 118–334 (NINKKHSFEN…GALNRVIVNA (217 aa)) are domain III, AAA+ region. Residues G162, G164, K165, and T166 each contribute to the ATP site. Positions 335 to 454 (NFTHRSITVE…FSNLIRTLSV (120 aa)) are domain IV, binds dsDNA.

It belongs to the DnaA family. In terms of assembly, oligomerizes as a right-handed, spiral filament on DNA at oriC.

It localises to the cytoplasm. In terms of biological role, plays an essential role in the initiation and regulation of chromosomal replication. ATP-DnaA binds to the origin of replication (oriC) to initiate formation of the DNA replication initiation complex once per cell cycle. Binds the DnaA box (a 9 base pair repeat at the origin) and separates the double-stranded (ds)DNA. Forms a right-handed helical filament on oriC DNA; dsDNA binds to the exterior of the filament while single-stranded (ss)DNA is stabiized in the filament's interior. The ATP-DnaA-oriC complex binds and stabilizes one strand of the AT-rich DNA unwinding element (DUE), permitting loading of DNA polymerase. After initiation quickly degrades to an ADP-DnaA complex that is not apt for DNA replication. Binds acidic phospholipids. The polypeptide is Chromosomal replication initiator protein DnaA (Buchnera aphidicola subsp. Schizaphis graminum (strain Sg)).